The sequence spans 150 residues: Cytochrome c oxidase subunit 5A, mitochondrial (150 aa).

A mitochondrion-targeting transit peptide spans 1–41 (MLGAALRRCAVAATTWAGPRGLLHSARTPGPAAAIQSVRCY). Residues 2–17 (LGAALRRCAVAATTWA) carry the SIFI-degron motif. N6-acetyllysine occurs at positions 87 and 113. Threonine 141 is modified (phosphothreonine).

It belongs to the cytochrome c oxidase subunit 5A family. In terms of assembly, component of the cytochrome c oxidase (complex IV, CIV), a multisubunit enzyme composed of 14 subunits. The complex is composed of a catalytic core of 3 subunits MT-CO1, MT-CO2 and MT-CO3, encoded in the mitochondrial DNA, and 11 supernumerary subunits COX4I, COX5A, COX5B, COX6A, COX6B, COX6C, COX7A, COX7B, COX7C, COX8 and NDUFA4, which are encoded in the nuclear genome. The complex exists as a monomer or a dimer and forms supercomplexes (SCs) in the inner mitochondrial membrane with NADH-ubiquinone oxidoreductase (complex I, CI) and ubiquinol-cytochrome c oxidoreductase (cytochrome b-c1 complex, complex III, CIII), resulting in different assemblies (supercomplex SCI(1)III(2)IV(1) and megacomplex MCI(2)III(2)IV(2)). Interacts with AFG1L. Interacts with RAB5IF. In response to mitochondrial stress, the precursor protein is ubiquitinated by the SIFI complex in the cytoplasm before mitochondrial import, leading to its degradation. Within the SIFI complex, UBR4 initiates ubiquitin chain that are further elongated or branched by KCMF1.

It localises to the mitochondrion inner membrane. It participates in energy metabolism; oxidative phosphorylation. Component of the cytochrome c oxidase, the last enzyme in the mitochondrial electron transport chain which drives oxidative phosphorylation. The respiratory chain contains 3 multisubunit complexes succinate dehydrogenase (complex II, CII), ubiquinol-cytochrome c oxidoreductase (cytochrome b-c1 complex, complex III, CIII) and cytochrome c oxidase (complex IV, CIV), that cooperate to transfer electrons derived from NADH and succinate to molecular oxygen, creating an electrochemical gradient over the inner membrane that drives transmembrane transport and the ATP synthase. Cytochrome c oxidase is the component of the respiratory chain that catalyzes the reduction of oxygen to water. Electrons originating from reduced cytochrome c in the intermembrane space (IMS) are transferred via the dinuclear copper A center (CU(A)) of subunit 2 and heme A of subunit 1 to the active site in subunit 1, a binuclear center (BNC) formed by heme A3 and copper B (CU(B)). The BNC reduces molecular oxygen to 2 water molecules using 4 electrons from cytochrome c in the IMS and 4 protons from the mitochondrial matrix. This is Cytochrome c oxidase subunit 5A, mitochondrial (COX5A) from Papio anubis (Olive baboon).